Reading from the N-terminus, the 434-residue chain is Nicotinate phosphoribosyltransferase (434 aa).

Histidine 242 is subject to Phosphohistidine; by autocatalysis.

This sequence belongs to the NAPRTase family. Transiently phosphorylated on a His residue during the reaction cycle. Phosphorylation strongly increases the affinity for substrates and increases the rate of nicotinate D-ribonucleotide production. Dephosphorylation regenerates the low-affinity form of the enzyme, leading to product release.

The catalysed reaction is nicotinate + 5-phospho-alpha-D-ribose 1-diphosphate + ATP + H2O = nicotinate beta-D-ribonucleotide + ADP + phosphate + diphosphate. Its pathway is cofactor biosynthesis; NAD(+) biosynthesis; nicotinate D-ribonucleotide from nicotinate: step 1/1. In terms of biological role, catalyzes the synthesis of beta-nicotinate D-ribonucleotide from nicotinate and 5-phospho-D-ribose 1-phosphate at the expense of ATP. In Nitrobacter hamburgensis (strain DSM 10229 / NCIMB 13809 / X14), this protein is Nicotinate phosphoribosyltransferase.